Consider the following 380-residue polypeptide: Cytochrome b (380 aa).

4 helical membrane-spanning segments follow: residues 34-54, 78-99, 114-134, and 179-199; these read FGSL…LLAM, WLIR…YMHI, WNTG…GYVL, and FFAL…IHLT. Heme b is bound by residues histidine 84 and histidine 98. Histidine 183 and histidine 197 together coordinate heme b. Histidine 202 serves as a coordination point for a ubiquinone. 4 helical membrane-spanning segments follow: residues 227 to 247, 289 to 309, 321 to 341, and 348 to 368; these read LKDI…ALFT, LGGV…PLLH, LSQS…WVGS, and FIII…ILLP.

This sequence belongs to the cytochrome b family. As to quaternary structure, the cytochrome bc1 complex contains 11 subunits: 3 respiratory subunits (MT-CYB, CYC1 and UQCRFS1), 2 core proteins (UQCRC1 and UQCRC2) and 6 low-molecular weight proteins (UQCRH/QCR6, UQCRB/QCR7, UQCRQ/QCR8, UQCR10/QCR9, UQCR11/QCR10 and a cleavage product of UQCRFS1). This cytochrome bc1 complex then forms a dimer. The cofactor is heme b.

It is found in the mitochondrion inner membrane. Its function is as follows. Component of the ubiquinol-cytochrome c reductase complex (complex III or cytochrome b-c1 complex) that is part of the mitochondrial respiratory chain. The b-c1 complex mediates electron transfer from ubiquinol to cytochrome c. Contributes to the generation of a proton gradient across the mitochondrial membrane that is then used for ATP synthesis. The chain is Cytochrome b (MT-CYB) from Falco peregrinus (Peregrine falcon).